We begin with the raw amino-acid sequence, 767 residues long: Dipeptidyl peptidase 4 (767 aa).

The Cytoplasmic segment spans residues 1-6; the sequence is MKTPWK. The chain crosses the membrane as a helical; Signal-anchor for type II membrane protein span at residues 7–28; the sequence is VLLGLLGVAALVTIITVPVVLL. Over 29–767 the chain is Extracellular; that stretch reads NKDEAAADSR…HFLQQCFSLR (739 aa). 6 N-linked (GlcNAc...) asparagine glycosylation sites follow: Asn83, Asn90, Asn148, Asn217, Asn227, and Asn319. Disulfide bonds link Cys326–Cys337, Cys383–Cys395, Cys445–Cys448, and Cys455–Cys473. An N-linked (GlcNAc...) asparagine glycan is attached at Asn521. Residue Ser631 is the Charge relay system of the active site. Residues Cys650 and Cys763 are joined by a disulfide bond. An N-linked (GlcNAc...) asparagine glycan is attached at Asn686. Active-site charge relay system residues include Asp709 and His741.

This sequence belongs to the peptidase S9B family. DPPIV subfamily. Monomer. Homodimer. Heterodimer with Seprase (FAP). Requires homodimerization for optimal dipeptidyl peptidase activity and T-cell costimulation. Found in a membrane raft complex, at least composed of BCL10, CARD11, DPP4 and IKBKB. Associates with collagen. Interacts with PTPRC; the interaction is enhanced in an interleukin-12-dependent manner in activated lymphocytes. Interacts (via extracellular domain) with ADA; does not inhibit its dipeptidyl peptidase activity. Interacts with CAV1 (via the N-terminus); the interaction is direct. Interacts (via cytoplasmic tail) with CARD11 (via PDZ domain); its homodimerization is necessary for interaction with CARD11. Interacts with IGF2R; the interaction is direct. Interacts with GPC3. Post-translationally, the soluble form (Dipeptidyl peptidase 4 soluble form also named SDPP) derives from the membrane form (Dipeptidyl peptidase 4 membrane form also named MDPP) by proteolytic processing. In terms of processing, N- and O-Glycosylated. Phosphorylated. Mannose 6-phosphate residues in the carbohydrate moiety are necessary for interaction with IGF2R in activated T-cells. Mannose 6-phosphorylation is induced during T-cell activation. In terms of tissue distribution, expressed in bile ducts and other epithelial brush borders (small intestine, kidney, colon, pancreatic duct); acinar structures in salivary glands; endothelial structures and T cell areas in thymus, spleen and lymph node.

The protein resides in the secreted. The protein localises to the cell membrane. It localises to the apical cell membrane. It is found in the cell projection. Its subcellular location is the invadopodium membrane. The protein resides in the lamellipodium membrane. The protein localises to the cell junction. It localises to the membrane raft. It catalyses the reaction Release of an N-terminal dipeptide, Xaa-Yaa-|-Zaa-, from a polypeptide, preferentially when Yaa is Pro, provided Zaa is neither Pro nor hydroxyproline.. Its activity is regulated as follows. Inhibited by GPC3 and diprotin A. Its function is as follows. Cell surface glycoprotein receptor involved in the costimulatory signal essential for T-cell receptor (TCR)-mediated T-cell activation. Acts as a positive regulator of T-cell coactivation, by binding at least ADA, CAV1, IGF2R, and PTPRC. Its binding to CAV1 and CARD11 induces T-cell proliferation and NF-kappa-B activation in a T-cell receptor/CD3-dependent manner. Its interaction with ADA also regulates lymphocyte-epithelial cell adhesion. In association with FAP is involved in the pericellular proteolysis of the extracellular matrix (ECM), the migration and invasion of endothelial cells into the ECM. May be involved in the promotion of lymphatic endothelial cells adhesion, migration and tube formation. When overexpressed, enhanced cell proliferation, a process inhibited by GPC3. Also acts as a serine exopeptidase with a dipeptidyl peptidase activity that regulates various physiological processes by cleaving peptides in the circulation, including many chemokines, mitogenic growth factors, neuropeptides and peptide hormones. Removes N-terminal dipeptides sequentially from polypeptides having unsubstituted N-termini provided that the penultimate residue is proline. The polypeptide is Dipeptidyl peptidase 4 (Dpp4) (Rattus norvegicus (Rat)).